A 394-amino-acid chain; its full sequence is Tryptophan synthase beta chain (394 aa).

N6-(pyridoxal phosphate)lysine is present on Lys-90.

This sequence belongs to the TrpB family. In terms of assembly, tetramer of two alpha and two beta chains. Pyridoxal 5'-phosphate is required as a cofactor.

The catalysed reaction is (1S,2R)-1-C-(indol-3-yl)glycerol 3-phosphate + L-serine = D-glyceraldehyde 3-phosphate + L-tryptophan + H2O. It participates in amino-acid biosynthesis; L-tryptophan biosynthesis; L-tryptophan from chorismate: step 5/5. Its function is as follows. The beta subunit is responsible for the synthesis of L-tryptophan from indole and L-serine. This chain is Tryptophan synthase beta chain, found in Bacteroides thetaiotaomicron (strain ATCC 29148 / DSM 2079 / JCM 5827 / CCUG 10774 / NCTC 10582 / VPI-5482 / E50).